Consider the following 457-residue polypeptide: UDP-N-acetylmuramate--L-alanine ligase (457 aa).

Position 112-118 (112-118 (GTHGKTT)) interacts with ATP.

This sequence belongs to the MurCDEF family.

It is found in the cytoplasm. The catalysed reaction is UDP-N-acetyl-alpha-D-muramate + L-alanine + ATP = UDP-N-acetyl-alpha-D-muramoyl-L-alanine + ADP + phosphate + H(+). The protein operates within cell wall biogenesis; peptidoglycan biosynthesis. In terms of biological role, cell wall formation. This Solidesulfovibrio magneticus (strain ATCC 700980 / DSM 13731 / RS-1) (Desulfovibrio magneticus) protein is UDP-N-acetylmuramate--L-alanine ligase.